We begin with the raw amino-acid sequence, 706 residues long: Polycomb protein SCMH1 (706 aa).

2 MBT repeats span residues 28–126 (FTWD…LQPP) and 134–235 (SSWP…LQPP). 2 disordered regions span residues 233–350 (QPPG…TVPS) and 576–595 (GSDR…RDPS). 2 stretches are compositionally biased toward basic residues: residues 272–283 (RGRKPGKKRGRT) and 304–319 (FPKK…RKPR). The segment covering 329–340 (PTTSTPEPDTST) has biased composition (low complexity). Residues 576–591 (GSDRHLESRDPPRLSG) are compositionally biased toward basic and acidic residues. Residues 597–662 (WTVEDVMQFV…SFHIDRLKQV (66 aa)) form the SAM domain.

It belongs to the SCM family. In terms of assembly, associates with a PRC1-like complex. Interacts with the SAM domain of PHC1 via its SAM domain in vitro. In terms of tissue distribution, most abundant in testis. Moderate levels detected in heart, brain, lung, liver, skeletal muscle and kidney and lower levels in spleen.

Its subcellular location is the nucleus. Functionally, associates with Polycomb group (PcG) multiprotein complexes; the complex class is required to maintain the transcriptionally repressive state of some genes. The protein is Polycomb protein SCMH1 of Mus musculus (Mouse).